We begin with the raw amino-acid sequence, 576 residues long: Septation ring formation regulator EzrA (576 aa).

Residues 1-7 (MSSTVII) lie on the Extracellular side of the membrane. A helical transmembrane segment spans residues 8–26 (LIVVLLVILVAFYAFAILM). The Cytoplasmic segment spans residues 27-576 (RKKTEDRILA…FKNKPTPDYL (550 aa)). 2 coiled-coil regions span residues 105 to 134 (RARE…VAQL) and 277 to 301 (EQFE…LYAI).

It belongs to the EzrA family.

It is found in the cell membrane. Its function is as follows. Negative regulator of FtsZ ring formation; modulates the frequency and position of FtsZ ring formation. Inhibits FtsZ ring formation at polar sites. Interacts either with FtsZ or with one of its binding partners to promote depolymerization. The polypeptide is Septation ring formation regulator EzrA (Lactococcus lactis subsp. lactis (strain IL1403) (Streptococcus lactis)).